The following is a 390-amino-acid chain: Zinc transporter 8 (390 aa).

The N-terminal stretch at 1–25 (MRTNTTATVLLAAAVALLLATAARG) is a signal peptide. Residue asparagine 4 is glycosylated (N-linked (GlcNAc...) asparagine). Residues 26–50 (DGGDGGCGKEDAAAGRDRARARGLK) are Extracellular-facing. A helical transmembrane segment spans residues 51–71 (IAAFFSILVCGALGCGLPSLG). At 72-82 (RHVPALRPDGD) the chain is on the cytoplasmic side. A helical membrane pass occupies residues 83 to 103 (VFFLVKAFAAGVILATGFIHI). The Extracellular portion of the chain corresponds to 104–124 (LPDAFDNLTDDCLPAGGPWKE). Asparagine 110 is a glycosylation site (N-linked (GlcNAc...) asparagine). Residues 125 to 145 (FPFAGFGAMVGAIGTLVVDTL) form a helical membrane-spanning segment. The Cytoplasmic portion of the chain corresponds to 146–235 (ATGYFTRALS…DDKETTLRHR (90 aa)). Positions 165–199 (VADEEKQSAAATQQHNHHHNHHVVGDGGGGGEEHE) are disordered. Residues 236–256 (VISQVLELGIVVHSVIIGISL) traverse the membrane as a helical segment. Residues 257-267 (GASQNPETIKP) lie on the Extracellular side of the membrane. A helical membrane pass occupies residues 268–288 (LVVALSFHQMFEGMGLGGCIV). Residues 289–296 (QAKFKVRS) lie on the Cytoplasmic side of the membrane. Residues 297–317 (IVTMVLFFCLTTPVGIAVGVG) traverse the membrane as a helical segment. Over 318–329 (ISSVYNESSPTA) the chain is Extracellular. N-linked (GlcNAc...) asparagine glycosylation is present at asparagine 323. A helical membrane pass occupies residues 330–350 (LVVEGILNSVAAGILIYMALV). Over 351 to 369 (DLLAEDFMNPRVQSKGKLQ) the chain is Cytoplasmic. Residues 370–390 (LGINLAMLAGAGLMSMLAKWA) traverse the membrane as a helical segment.

Belongs to the ZIP transporter (TC 2.A.5) family.

Its subcellular location is the cell membrane. Zinc transporter that may mediate zinc uptake from the rhizosphere and may be responsible for the translocation of zinc within the plant. The protein is Zinc transporter 8 (ZIP8) of Oryza sativa subsp. japonica (Rice).